Consider the following 102-residue polypeptide: Pole-localizer protein TmaR (102 aa).

Residues 7-34 are a coiled coil; the sequence is IINQARRKNKLKRELQDNQKKIRDNQKR.

Belongs to the pole-localizer TmaR family.

The protein localises to the cytoplasm. Its function is as follows. Pole-localizer protein involved in the regulation of several cellular processes. The protein is Pole-localizer protein TmaR of Aliivibrio fischeri (strain ATCC 700601 / ES114) (Vibrio fischeri).